The following is a 1167-amino-acid chain: MKKSLIALTTALSFGLAAAQTAAPVSAPQVPALTDVPAGHWAKDAIDRLVSRGVILGYPDGTFRGTQNLTRYEAAIIIARLLDQMRDGETPAGMTAEDMTALQNAIQELAADLAALGVRVSDLEANAVSKDDFARLEARIEEVAAAGGEQGATEALQGQIDDLTARVDEYDALRADVDDNASSIAALNDLTVLLNQDILDLQDRVSAVEAAQADFVQRSDFDALGGRVTTVETRVETVNNSLTGRIAALERNAFSVKPSLTIGYSVSRTSRNFDVDRLFPLNADGTVANNAFTSGGIDTDTGAQRRDFGDFGNASDPVVAGAAGLYGFADGVSYTVYFTDGSTATFDGLNPADYKVPTGKVIDTTKGRNGFGFNNLARYKEGSTDIGISLGFDTSGQFSQVTSGTGGSLFSTAGRLQVNQIDLNFGLVTGLPSDAYVDTNGNGKKDDGEATGRGTYLGSGGTAAILRDPAGNVYRPVFFRFKNATTQFSVGNNPVIVTLGQQQKFYFSDYVFDNNYDGRGDGFTVTVDGSNVPVIGAWKPQIKGVYGSRSGLDGTAEAGYGVYYRGVRAQITPVGTLTAGIHYAQEGRDMFGAAQNTTSTPSDVTTYGADLHGKAFGVELHSEYATSRVRPNTANAAVQTSNAFYARVATRKDNLAFDLNTPAAKFGNDTFGVSLYDLNYRKIDAGYNNVAGISEYGYGSYSRTSAQNIAYNPDTGVTAPFANLDRQAYTDANNDGTSDRNADGTVVATNTKIGQMGFGVKAAANLGPVAIGGYYDTSTGANGDNANRMTEAGGSAKVAYSIFSLRGTYNTLDSNRPQIYRDAAGTQIIGDAKVRRYAVQADVTPGLGLFVGAYYRDVNVNGVRSTTDRGLLGRGYLASSFEPGVGNNAYRTGLRCADNNFGTGTRDIDGVGGVLNPAVNLDQSRTATCFTSYGVEAGHAGDNANALVKDLFFRVGYSRVYVPTTATATTGDFSGSVTYGDARYDRKVGVANVRLAGSFSTTNTQLDSRPAGTRGAVGLIVRTDPLENVPFRPQFNGQVGYYTADNRVAAGNYNANATKYGAGVVLNDFLLPQTKIGVRYDGYMAQNRQYTPFDGDGTQGYFSDANNNRRTNLNGVYVEGAYQDLIFSYGTYTLSQKDLNGVEYGSGINNGQPARGQTFKISYKVNF.

Residues 1 to 22 (MKKSLIALTTALSFGLAAAQTA) form the signal peptide. The Periplasmic portion of the chain corresponds to 23–254 (APVSAPQVPA…RIAALERNAF (232 aa)). The region spanning 29-92 (QVPALTDVPA…DQMRDGETPA (64 aa)) is the SLH domain. A beta stranded transmembrane segment spans residues 255-268 (SVKPSLTIGYSVSR). The Extracellular portion of the chain corresponds to 269–377 (TSRNFDVDRL…RNGFGFNNLA (109 aa)). Positions 274, 276, 305, 308, 310, and 381 each coordinate Cu(2+). A beta stranded transmembrane segment spans residues 378–403 (RYKEGSTDIGISLGFDTSGQFSQVTS). Topologically, residues 404–416 (GTGGSLFSTAGRL) are periplasmic. A beta stranded transmembrane segment spans residues 417–428 (QVNQIDLNFGLV). The Extracellular portion of the chain corresponds to 429–471 (TGLPSDAYVDTNGNGKKDDGEATGRGTYLGSGGTAAILRDPAG). Fe(3+)-binding residues include aspartate 438, asparagine 442, lysine 444, aspartate 446, and glutamate 449. A beta stranded transmembrane segment spans residues 472–490 (NVYRPVFFRFKNATTQFSV). The Periplasmic segment spans residues 491-494 (GNNP). A beta stranded transmembrane segment spans residues 495 to 500 (VIVTLG). Residues 501–519 (QQQKFYFSDYVFDNNYDGR) lie on the Extracellular side of the membrane. Residues aspartate 513 and asparagine 515 each coordinate Cu(2+). The chain crosses the membrane as a beta stranded span at residues 520–528 (GDGFTVTVD). Topologically, residues 529–540 (GSNVPVIGAWKP) are periplasmic. Residues 541-549 (QIKGVYGSR) form a beta stranded membrane-spanning segment. The Cu(2+) site is built by arginine 549, glycine 551, aspartate 553, and glycine 559. Residues 550–561 (SGLDGTAEAGYG) lie on the Extracellular side of the membrane. Residues 562-571 (VYYRGVRAQI) form a beta stranded membrane-spanning segment. Residues 572–577 (TPVGTL) are Periplasmic-facing. The chain crosses the membrane as a beta stranded span at residues 578–588 (TAGIHYAQEGR). The Extracellular segment spans residues 589–601 (DMFGAAQNTTSTP). Residues 602–615 (SDVTTYGADLHGKA) form a beta stranded membrane-spanning segment. Residues 616-617 (FG) are Periplasmic-facing. The chain crosses the membrane as a beta stranded span at residues 618 to 630 (VELHSEYATSRVR). Serine 622 provides a ligand contact to deinoxanthin. The Extracellular portion of the chain corresponds to 631-638 (PNTANAAV). Residues 639–649 (QTSNAFYARVA) form a beta stranded membrane-spanning segment. Residues 650 to 670 (TRKDNLAFDLNTPAAKFGNDT) lie on the Periplasmic side of the membrane. Residues 671–682 (FGVSLYDLNYRK) traverse the membrane as a beta stranded segment. Residues 683 to 753 (IDAGYNNVAG…GTVVATNTKI (71 aa)) are Extracellular-facing. Glycine 716 is a binding site for Cu(2+). A beta stranded transmembrane segment spans residues 754 to 766 (GQMGFGVKAAANL). The Periplasmic portion of the chain corresponds to 767 to 768 (GP). Residues 769–779 (VAIGGYYDTST) traverse the membrane as a beta stranded segment. The Extracellular segment spans residues 780–788 (GANGDNANR). The chain crosses the membrane as a beta stranded span at residues 789-798 (MTEAGGSAKV). At 799 to 802 (AYSI) the chain is on the periplasmic side. A beta stranded membrane pass occupies residues 803 to 814 (FSLRGTYNTLDS). The Extracellular portion of the chain corresponds to 815–831 (NRPQIYRDAAGTQIIGD). Residues 832-843 (AKVRRYAVQADV) form a beta stranded membrane-spanning segment. Residues 844–848 (TPGLG) are Periplasmic-facing. The beta stranded transmembrane segment at 849-860 (LFVGAYYRDVNV) threads the bilayer. Over 861–931 (NGVRSTTDRG…DQSRTATCFT (71 aa)) the chain is Extracellular. The beta stranded transmembrane segment at 932–940 (SYGVEAGHA) threads the bilayer. The Periplasmic portion of the chain corresponds to 941–949 (GDNANALVK). A beta stranded membrane pass occupies residues 950 to 960 (DLFFRVGYSRV). At 961-976 (YVPTTATATTGDFSGS) the chain is on the extracellular side. A beta stranded membrane pass occupies residues 977-988 (VTYGDARYDRKV). The Periplasmic portion of the chain corresponds to 989 to 990 (GV). The beta stranded transmembrane segment at 991–1002 (ANVRLAGSFSTT) threads the bilayer. At 1003–1014 (NTQLDSRPAGTR) the chain is on the extracellular side. A beta stranded transmembrane segment spans residues 1015 to 1023 (GAVGLIVRT). Topologically, residues 1024 to 1032 (DPLENVPFR) are periplasmic. Residues 1033–1046 (PQFNGQVGYYTADN) form a beta stranded membrane-spanning segment. Over 1047-1052 (RVAAGN) the chain is Extracellular. A beta stranded transmembrane segment spans residues 1053-1066 (YNANATKYGAGVVL). Over 1067 to 1073 (NDFLLPQ) the chain is Periplasmic. A beta stranded membrane pass occupies residues 1074 to 1086 (TKIGVRYDGYMAQ). Residues 1087-1108 (NRQYTPFDGDGTQGYFSDANNN) are Extracellular-facing. Residues 1109-1122 (RRTNLNGVYVEGAY) form a beta stranded membrane-spanning segment. The Periplasmic portion of the chain corresponds to 1123-1124 (QD). Residues 1125-1138 (LIFSYGTYTLSQKD) traverse the membrane as a beta stranded segment. Over 1139-1153 (LNGVEYGSGINNGQP) the chain is Extracellular. A beta stranded membrane pass occupies residues 1154–1166 (ARGQTFKISYKVN). A topological domain (periplasmic) is located at residue phenylalanine 1167.

As to quaternary structure, homotrimer. Part of a heterooligomeric complex resulting in the main assembly named S-layer deinoxanthin-binding complex (SDBC) which is composed of six different subunits, namely SlpA, DR_2310, DR_0505, DR_A0283, DR_A0282, and DR_A0281.

It is found in the cell envelope. The protein resides in the cell outer membrane. It catalyses the reaction L-arginine(in) = L-arginine(out). The catalysed reaction is L-lysine(in) = L-lysine(out). It carries out the reaction L-glutamate(out) = L-glutamate(in). Its function is as follows. Plays an important role in the structural organization and integrity of the cell envelope, bridging the outer membrane to the peptidoglyan layer. Is a highly abundant molecule in the D.radiodurans cell envelope but is not a fundamental component of the S-layer. Binds the carotenoid deinoxanthin, a strong protective antioxidant specific of this bacterium, and could be part of the first lane of defense against UV radiation, especially under desiccation. Appears to be a nonselective channel. Is able to transport charged amino acids such as Lys, Arg and Glu; the large dimension of the pore points toward the physiological importance of the SDBC complex in assisting and allowing the exchange of substances, including nutrients, with the surrounding environment. In Deinococcus radiodurans (strain ATCC 13939 / DSM 20539 / JCM 16871 / CCUG 27074 / LMG 4051 / NBRC 15346 / NCIMB 9279 / VKM B-1422 / R1), this protein is Outer membrane protein SlpA.